Consider the following 401-residue polypeptide: Imidazolonepropionase (401 aa).

Residues H66 and H68 each contribute to the Fe(3+) site. Positions 66 and 68 each coordinate Zn(2+). Residues R75, Y138, and H171 each contribute to the 4-imidazolone-5-propanoate site. Residue Y138 coordinates N-formimidoyl-L-glutamate. Position 236 (H236) interacts with Fe(3+). H236 is a binding site for Zn(2+). Q239 is a binding site for 4-imidazolone-5-propanoate. Residue D311 coordinates Fe(3+). Position 311 (D311) interacts with Zn(2+). N-formimidoyl-L-glutamate-binding residues include N313 and G315. T316 provides a ligand contact to 4-imidazolone-5-propanoate.

This sequence belongs to the metallo-dependent hydrolases superfamily. HutI family. Requires Zn(2+) as cofactor. Fe(3+) is required as a cofactor.

It localises to the cytoplasm. It catalyses the reaction 4-imidazolone-5-propanoate + H2O = N-formimidoyl-L-glutamate. Its pathway is amino-acid degradation; L-histidine degradation into L-glutamate; N-formimidoyl-L-glutamate from L-histidine: step 3/3. Catalyzes the hydrolytic cleavage of the carbon-nitrogen bond in imidazolone-5-propanoate to yield N-formimidoyl-L-glutamate. It is the third step in the universal histidine degradation pathway. The protein is Imidazolonepropionase of Acinetobacter baumannii (strain ACICU).